The chain runs to 545 residues: Membrane protein insertase YidC (545 aa).

6 consecutive transmembrane segments (helical) span residues 10–30 (AIYL…IFFS), 319–339 (LLYF…NVIP), 341–361 (WGLS…PLTF), 407–427 (LGGC…YGLV), 467–487 (ILPF…SNVS), and 502–522 (MPIM…IYWI).

This sequence belongs to the OXA1/ALB3/YidC family. Type 1 subfamily. Interacts with the Sec translocase complex via SecD. Specifically interacts with transmembrane segments of nascent integral membrane proteins during membrane integration.

The protein resides in the cell inner membrane. Functionally, required for the insertion and/or proper folding and/or complex formation of integral membrane proteins into the membrane. Involved in integration of membrane proteins that insert both dependently and independently of the Sec translocase complex, as well as at least some lipoproteins. Aids folding of multispanning membrane proteins. The polypeptide is Membrane protein insertase YidC (Borrelia hermsii (strain HS1 / DAH)).